We begin with the raw amino-acid sequence, 159 residues long: MNAQKGFTLIELMIVIAIIGILAAIALPAYQDYISKSQTTRVSGELAAGKTAVDAALFEGKTPVLSEESSTSKENIGLTSSETSTKPRSNLMASVELTGFADNGAGTISATLGNKANKDIAKTVITQERTTDGVWTCKIDGSQAAKYKEKFNPTGCVKK.

The propeptide at 1–6 (MNAQKG) is leader sequence. Phe7 bears the N-methylphenylalanine mark. The chain crosses the membrane as a helical span at residues 7–27 (FTLIELMIVIAIIGILAAIAL). A disordered region spans residues 64-87 (VLSEESSTSKENIGLTSSETSTKP). Polar residues predominate over residues 67-87 (EESSTSKENIGLTSSETSTKP). A disulfide bond links Cys137 and Cys156.

Belongs to the N-Me-Phe pilin family. Major component of the type IV pilus (T4P) that plays a role in surface and attachment to the host epithelial tissues.

The protein localises to the fimbrium. It is found in the membrane. In Moraxella bovis, this protein is Type IV major alpha-pilin (tfpI).